Reading from the N-terminus, the 1149-residue chain is Protein deacetylase HDAC6 (1149 aa).

Residues 1–61 (MTSTGQDSST…KGKMKKLSQP (61 aa)) are disordered. Polar residues predominate over residues 18-29 (NPQSPLQESSAT). Ser21 carries the phosphoserine modification. At Arg32 the chain carries Omega-N-methylarginine. The residue at position 43 (Ser43) is a Phosphoserine. Residues 66 to 75 (LVVGLQGLDL) carry the Nuclear export signal motif. Histone deacetylase regions lie at residues 87–403 (LVFD…TLLG) and 481–799 (GLVY…SLLG). His215 serves as the catalytic 1. The 2 role is filled by His610. The disordered stretch occupies residues 954-975 (ALGETEPTPPASHTNKQTTGAS). Thr958, Thr961, Thr967, and Thr971 each carry phosphothreonine. Positions 964–975 (ASHTNKQTTGAS) are enriched in polar residues. Ser975 is modified (phosphoserine). Residues 1045-1143 (SWCPHLMAVC…NAAHQNKFGE (99 aa)) form a UBP-type zinc finger. The Zn(2+) site is built by Cys1047, His1049, Cys1067, Cys1070, Cys1079, Cys1082, and Cys1087. The segment at 1088–1090 (SRY) is ubiquitin binding. The Zn(2+) site is built by His1094, His1098, His1104, Cys1117, and Cys1120. A ubiquitin binding region spans residues 1116 to 1123 (WCYVCQAY). Ser1148 is subject to Phosphoserine.

It belongs to the histone deacetylase family. HD type 2 subfamily. As to quaternary structure, forms a trimeric complex in the nucleus consisting of BANP, HDAC6 and KHDRBS1/SAM68; HDAC6 keeps KHDRBS1 in a deacetylated state which inhibits the inclusion of CD44 alternate exons. The complex is disrupted by MAPK1/MAPK3-mediated phosphorylation of BANP which results in BANP export to the cytoplasm. This facilitates acetylation of KHDRBS1 and CD44 variant exon inclusion. Interacts with SIRT2 (via both phosphorylated, unphosphorylated, active or inactive forms); the interaction is necessary for the complex to interact with alpha-tubulin. Under proteasome impairment conditions, interacts with UBD via its histone deacetylase 1 and UBP-type zinc-finger regions. Interacts with BBIP1, CBFA2T3, CYLD, DDIT3/CHOP, ZMYND15, F-actin and HDAC11. Interacts with RIPOR2; this interaction occurs during early myogenic differentiation and prevents HDAC6 to deacetylate tubulin. Interacts with AURKA; AURKA-mediated phosphorylation of HDAC6 promotes deacetylation of alpha-tubulin. Interacts with DYSF; this interaction occurs during early myogenic differentiation. Interacts with TPPP; inhibiting the tubulin deacetylase activity of HDAC6. Interacts with DYNLL1. Interacts with ATP13A2; the interaction results in recruitment of HDAC6 to lysosomes to promote CTTN deacetylation. Interacts with CCDC141 (via the N-terminal region); inhibiting the deacetylase activity of HDAC6. Interacts with IPO7; the interaction facilitates HDAC6 nuclear translocation in dental papilla cells. The cofactor is Zn(2+). In terms of processing, phosphorylated by AURKA; phosphorylation increases HDAC6-mediated deacetylation of alpha-tubulin and subsequent disassembly of cilia. Ubiquitinated. Its polyubiquitination however does not lead to its degradation. Post-translationally, sumoylated in vitro. Expressed in neurons of the cortex. Expressed in Purkinje cells. Detected in keratinocytes (at protein level).

The protein localises to the cytoplasm. The protein resides in the cytoskeleton. It is found in the nucleus. It localises to the perikaryon. Its subcellular location is the cell projection. The protein localises to the dendrite. The protein resides in the axon. It is found in the cilium. It localises to the microtubule organizing center. Its subcellular location is the centrosome. The protein localises to the cilium basal body. It carries out the reaction N(6)-acetyl-L-lysyl-[protein] + H2O = L-lysyl-[protein] + acetate. The catalysed reaction is N(6)-acetyl-L-lysyl-[alpha-tubulin] + H2O = L-lysyl-[alpha-tubulin] + acetate. Its pathway is protein modification; protein ubiquitination. In terms of biological role, deacetylates a wide range of non-histone substrates. Plays a central role in microtubule-dependent cell motility by mediating deacetylation of tubulin. Required for cilia disassembly via deacetylation of alpha-tubulin. Alpha-tubulin deacetylation results in destabilization of dynamic microtubules. Promotes deacetylation of CTTN, leading to actin polymerization, promotion of autophagosome-lysosome fusion and completion of autophagy. Deacetylates SQSTM1. Deacetylates peroxiredoxins PRDX1 and PRDX2, decreasing their reducing activity. Deacetylates antiviral protein RIGI in the presence of viral mRNAs which is required for viral RNA detection by RIGI. Sequentially deacetylates and polyubiquitinates DNA mismatch repair protein MSH2 which leads to MSH2 degradation, reducing cellular sensitivity to DNA-damaging agents and decreasing cellular DNA mismatch repair activities. Deacetylates DNA mismatch repair protein MLH1 which prevents recruitment of the MutL alpha complex (formed by the MLH1-PMS2 heterodimer) to the MutS alpha complex (formed by the MSH2-MSH6 heterodimer), leading to tolerance of DNA damage. Deacetylates RHOT1/MIRO1 which blocks mitochondrial transport and mediates axon growth inhibition. Deacetylates transcription factor SP1 which leads to increased expression of ENG, positively regulating angiogenesis. Deacetylates KHDRBS1/SAM68 which regulates alternative splicing by inhibiting the inclusion of CD44 alternate exons. Promotes odontoblast differentiation following IPO7-mediated nuclear import and subsequent repression of RUNX2 expression. In addition to its protein deacetylase activity, plays a key role in the degradation of misfolded proteins: when misfolded proteins are too abundant to be degraded by the chaperone refolding system and the ubiquitin-proteasome, mediates the transport of misfolded proteins to a cytoplasmic juxtanuclear structure called aggresome. Probably acts as an adapter that recognizes polyubiquitinated misfolded proteins and target them to the aggresome, facilitating their clearance by autophagy. In Mus musculus (Mouse), this protein is Protein deacetylase HDAC6.